Consider the following 351-residue polypeptide: 4-hydroxy-3-methylbut-2-enyl diphosphate reductase (351 aa).

[4Fe-4S] cluster is bound at residue Cys18. His47 and His83 together coordinate (2E)-4-hydroxy-3-methylbut-2-enyl diphosphate. Positions 47 and 83 each coordinate dimethylallyl diphosphate. His47 and His83 together coordinate isopentenyl diphosphate. Cys105 is a binding site for [4Fe-4S] cluster. His133 is a (2E)-4-hydroxy-3-methylbut-2-enyl diphosphate binding site. His133 contributes to the dimethylallyl diphosphate binding site. His133 lines the isopentenyl diphosphate pocket. Glu135 (proton donor) is an active-site residue. Position 174 (Thr174) interacts with (2E)-4-hydroxy-3-methylbut-2-enyl diphosphate. Cys204 contacts [4Fe-4S] cluster. Residues Ser232, Ser233, Asn234, and Ser277 each coordinate (2E)-4-hydroxy-3-methylbut-2-enyl diphosphate. Ser232, Ser233, Asn234, and Ser277 together coordinate dimethylallyl diphosphate. Isopentenyl diphosphate contacts are provided by Ser232, Ser233, Asn234, and Ser277.

It belongs to the IspH family. [4Fe-4S] cluster serves as cofactor.

It catalyses the reaction isopentenyl diphosphate + 2 oxidized [2Fe-2S]-[ferredoxin] + H2O = (2E)-4-hydroxy-3-methylbut-2-enyl diphosphate + 2 reduced [2Fe-2S]-[ferredoxin] + 2 H(+). The enzyme catalyses dimethylallyl diphosphate + 2 oxidized [2Fe-2S]-[ferredoxin] + H2O = (2E)-4-hydroxy-3-methylbut-2-enyl diphosphate + 2 reduced [2Fe-2S]-[ferredoxin] + 2 H(+). It functions in the pathway isoprenoid biosynthesis; dimethylallyl diphosphate biosynthesis; dimethylallyl diphosphate from (2E)-4-hydroxy-3-methylbutenyl diphosphate: step 1/1. The protein operates within isoprenoid biosynthesis; isopentenyl diphosphate biosynthesis via DXP pathway; isopentenyl diphosphate from 1-deoxy-D-xylulose 5-phosphate: step 6/6. In terms of biological role, catalyzes the conversion of 1-hydroxy-2-methyl-2-(E)-butenyl 4-diphosphate (HMBPP) into a mixture of isopentenyl diphosphate (IPP) and dimethylallyl diphosphate (DMAPP). Acts in the terminal step of the DOXP/MEP pathway for isoprenoid precursor biosynthesis. This is 4-hydroxy-3-methylbut-2-enyl diphosphate reductase from Bartonella tribocorum (strain CIP 105476 / IBS 506).